The following is a 384-amino-acid chain: Protein cutoff (384 aa).

The protein belongs to the DXO/Dom3Z family. As to quaternary structure, component of the Rhino-Deadlock-Cutoff (RDC) complex, composed of rhi/rhino, del/deadlock and cuff/cutoff. Interacts with rhi/rhino; this interaction is indirect and is mediated by del/deadlock. Interacts with del/deadlock (via C-terminal); this interaction is direct. Interacts with Rat1.

It is found in the cytoplasm. The protein resides in the nucleus. Its subcellular location is the chromosome. Functionally, involved in the piRNA pathway in germline tissues. Part of the Rhino-Deadlock-Cutoff (RDC) complex that stimulates piRNA biogenesis from chromatin regions corresponding to dual-strand, but not single-stranded, piRNA clusters. Promotes transcription of long piRNA precursors by preventing termination at canonical poly(A) sites. As part of the RDC complex, is recruited to chromatin enriched in histone modification H3K9me3 and might contribute to complex interaction by binding nascent transcript nucleic acid chains. Associates with chromatin upon exposure to homologous piRNA. Suppresses cleavage at canonical poly(A) sites by blocking recruitment of the cleavage and polyadenylation specificity factor (CPSF) complex and prevents transcriptional termination by RNA polymerase II, facilitating transcriptional read-through. As part of the RDC complex, involved in suppression of splicing. Catalytically inactive, lacking 5'-3' exonuclease and pyrophosphohydrolase activities. Stabilizes uncapped piRNA precursors in the nucleus, probably by sequestering or blocking the exonuclease activity of Rat1. May also be involved in siRNA biogenesis from dual-strand piRNA clusters. In Drosophila melanogaster (Fruit fly), this protein is Protein cutoff (cuff).